Reading from the N-terminus, the 314-residue chain is Putative SET domain-containing protein L222 (314 aa).

Positions 23 to 172 (EYIQVIYQNP…ANTEITISYG (150 aa)) constitute an SET domain.

It belongs to the class V-like SAM-binding methyltransferase superfamily.

The chain is Putative SET domain-containing protein L222 from Acanthamoeba polyphaga mimivirus (APMV).